We begin with the raw amino-acid sequence, 181 residues long: uncharacterized protein (181 aa).

An N-terminal signal peptide occupies residues 1 to 22; it reads MNKKSLLVVLVIALAVVPFAAT.

This is an uncharacterized protein from Halorubrum pleomorphic virus 1 (HRPV-1).